Consider the following 85-residue polypeptide: N.vectensis toxin 1 4 (85 aa).

Positions 1-20 (MASFKIVIVCLALLVAVASA) are cleaved as a signal peptide. Positions 21-36 (RRRDMMSDDELDYHYS) are excised as a propeptide. Cystine bridges form between cysteine 42–cysteine 82, cysteine 44–cysteine 72, and cysteine 65–cysteine 83.

It belongs to the sea anemone sodium channel inhibitory toxin family. Type II subfamily. Expressed in ectodermal glands and in clumps outside of the extodermal layer. Is not expressed in nematocytes. In adult female tissues, shows similar expression levels in mesenteries (gametes-producing tissue), tentacles, pharynx and physa.

Its subcellular location is the secreted. In terms of biological role, binds to site 3 of voltage-gated sodium channels and inhibits the inactivation process. Is highly active on DmNav1/TipE (drosophila) and is only extremely weakly active on rat Nav1.4-beta-1/SCN4A-SCN1B, and on human Nav1.5-beta-1/SCN5A-beta-1. This reveals high specificity for arthropod over mammalian channels. In vivo, when released into the medium, this recombinant toxin induces impaired swimming, paralysis and death of the crustacean A.nauplii within several hours. Also causes paralysis of cherry shrimps immediately after injection at very low doses. Its effect on zebrafish (D.rerio) larvae is also rapid, since it induces tail twitching accompanied by impaired swimming after 20 minutes and complete paralysis within 45 minutes. It has also been observed to cause death of zebrafish larvae within 1 hour. The protein is N.vectensis toxin 1 4 of Nematostella vectensis (Starlet sea anemone).